Reading from the N-terminus, the 294-residue chain is Sulfotransferase 1E1 (294 aa).

47 to 52 (KSGTTW) contacts 3'-phosphoadenylyl sulfate. Position 105–107 (105–107 (KTH)) interacts with substrate. H107 acts as the Proton acceptor in catalysis. 3'-phosphoadenylyl sulfate is bound by residues R129, S137, Y192, 226 to 231 (TSFQEM), and 256 to 258 (RKG).

The protein belongs to the sulfotransferase 1 family. In terms of assembly, homodimer. In terms of tissue distribution, liver, intestine and at lower level in the kidney.

The protein localises to the cytoplasm. The protein resides in the cytosol. The catalysed reaction is estrone + 3'-phosphoadenylyl sulfate = estrone 3-sulfate + adenosine 3',5'-bisphosphate + H(+). It catalyses the reaction (24S)-hydroxycholesterol + 3'-phosphoadenylyl sulfate = (24S)-hydroxycholesterol 3-sulfate + adenosine 3',5'-bisphosphate + H(+). It carries out the reaction 17beta-estradiol + 3'-phosphoadenylyl sulfate = 17beta-estradiol 3-sulfate + adenosine 3',5'-bisphosphate + H(+). The enzyme catalyses 3beta-hydroxyandrost-5-en-17-one + 3'-phosphoadenylyl sulfate = dehydroepiandrosterone 3-sulfate + adenosine 3',5'-bisphosphate + H(+). The catalysed reaction is 4-ethylphenol + 3'-phosphoadenylyl sulfate = 4-ethylphenyl sulfate + adenosine 3',5'-bisphosphate + H(+). Its activity is regulated as follows. Inhibited by estradiol. Its function is as follows. Sulfotransferase that utilizes 3'-phospho-5'-adenylyl sulfate (PAPS) as sulfonate donor to catalyze the sulfate conjugation of estradiol and estrone. Is a key enzyme in estrogen homeostasis, the sulfation of estrogens leads to their inactivation. Also sulfates dehydroepiandrosterone (DHEA), pregnenolone, (24S)-hydroxycholesterol and xenobiotic compounds like ethinylestradiol, equalenin, diethyl stilbesterol and 1-naphthol at significantly lower efficiency. Does not sulfonate cortisol, testosterone and dopamine. May play a role in gut microbiota-host metabolic interaction. O-sulfonates 4-ethylphenol (4-EP), a dietary tyrosine-derived metabolite produced by gut bacteria. The product 4-EPS crosses the blood-brain barrier and may negatively regulate oligodendrocyte maturation and myelination, affecting the functional connectivity of different brain regions associated with the limbic system. The polypeptide is Sulfotransferase 1E1 (SULT1E1) (Homo sapiens (Human)).